Here is a 193-residue protein sequence, read N- to C-terminus: Probable nicotinate-nucleotide adenylyltransferase (193 aa).

It belongs to the NadD family.

The enzyme catalyses nicotinate beta-D-ribonucleotide + ATP + H(+) = deamido-NAD(+) + diphosphate. Its pathway is cofactor biosynthesis; NAD(+) biosynthesis; deamido-NAD(+) from nicotinate D-ribonucleotide: step 1/1. Catalyzes the reversible adenylation of nicotinate mononucleotide (NaMN) to nicotinic acid adenine dinucleotide (NaAD). The protein is Probable nicotinate-nucleotide adenylyltransferase of Chlorobium phaeovibrioides (strain DSM 265 / 1930) (Prosthecochloris vibrioformis (strain DSM 265)).